We begin with the raw amino-acid sequence, 382 residues long: E3 ubiquitin-protein ligase RNF133 (382 aa).

The region spanning 65 to 167 (SSILKRVAGV…IKGMEILHLI (103 aa)) is the PA domain. The helical transmembrane segment at 190 to 210 (YFVSFMIVTTATLAYFTFYHI) threads the bilayer. The segment at 256–297 (CVICFEAYKPNEIVRILTCKHFFHKNCIDPWILAHGTCPMCK) adopts an RING-type; atypical zinc-finger fold. Residues 328 to 382 (TLSPVEEETNYELPPARTSSKVTHVQEHPTSSANAGSQPPEAEETSHPSHGQQVL) form a disordered region. Residues 344-364 (RTSSKVTHVQEHPTSSANAGS) show a composition bias toward polar residues.

Interacts with E3 ligase UBE2J1. Post-translationally, auto-ubiquitinated. Expression is testis-specific.

It localises to the endoplasmic reticulum membrane. The catalysed reaction is S-ubiquitinyl-[E2 ubiquitin-conjugating enzyme]-L-cysteine + [acceptor protein]-L-lysine = [E2 ubiquitin-conjugating enzyme]-L-cysteine + N(6)-ubiquitinyl-[acceptor protein]-L-lysine.. The protein operates within protein modification; protein ubiquitination. Functionally, has E3 ubiquitin-protein ligase activity. Plays a role in male fecundity through the interaction with the E2 ubituitin-protein ligase UBE2J1. The chain is E3 ubiquitin-protein ligase RNF133 (Rnf133) from Mus musculus (Mouse).